A 570-amino-acid polypeptide reads, in one-letter code: Structure-specific endonuclease subunit EME1 (570 aa).

The segment covering 1–12 (MALKKSSPSLDS) has biased composition (low complexity). The segment at 1-42 (MALKKSSPSLDSGDSDSEELPTFAFLKKEPSSTKRRQPEREE) is disordered. Phosphoserine occurs at positions 12 and 15. Residues 26–42 (LKKEPSSTKRRQPEREE) show a composition bias toward basic and acidic residues. S84, S85, and S87 each carry phosphoserine. Residue K103 forms a Glycyl lysine isopeptide (Lys-Gly) (interchain with G-Cter in SUMO2) linkage. Residues S111 and S117 each carry the phosphoserine modification. Residues K136 and K141 each participate in a glycyl lysine isopeptide (Lys-Gly) (interchain with G-Cter in SUMO2) cross-link. T150 carries the post-translational modification Phosphothreonine. 2 disordered regions span residues 187–233 (KTNS…ERKN) and 372–400 (AQNPPRRGKQGANKQTKKQQQRQPEASIG). The span at 220-233 (RQKESTLRRQERKN) shows a compositional bias: basic and acidic residues. The interval 250–456 (KHIIVVLDPV…PFKKLRDETT (207 aa)) is nuclease-like domain; forms the post-nick DNA binding interface and is involved in DNA recognition and bending. Residues 476-570 (RGLALVWRRQ…QPHLSLDSAD (95 aa)) are helix-hairpin-helix (2HhH); forms the pre-nick DNA binding interface and is involved in DNA recognition and bending.

This sequence belongs to the EME1/MMS4 family. In terms of assembly, part of the heterodimeric MUS81-EME1 complex.

The protein localises to the nucleus. The protein resides in the nucleolus. Functionally, non-catalytic subunit of the structure-specific, heterodimeric DNA endonuclease MUS81-EME1 which is involved in the maintenance of genome stability. In the complex, EME1 is required for DNA cleavage, participating in DNA recognition and bending. MUS81-EME1 cleaves 3'-flaps and nicked Holliday junctions, and exhibit limited endonuclease activity with 5' flaps and nicked double-stranded DNAs. Active during prometaphase, MUS81-EME1 resolves mitotic recombination intermediates, including Holliday junctions, which form during homologous recombination. This is Structure-specific endonuclease subunit EME1 from Homo sapiens (Human).